Reading from the N-terminus, the 173-residue chain is Photosystem I assembly protein Ycf3 (173 aa).

TPR repeat units lie at residues 35–68 (AYVY…EENP), 72–105 (GETL…NPKQ), and 120–153 (GRTA…NPGG).

It belongs to the Ycf3 family.

Its subcellular location is the cellular thylakoid membrane. Its function is as follows. Essential for the assembly of the photosystem I (PSI) complex. May act as a chaperone-like factor to guide the assembly of the PSI subunits. In Synechococcus sp. (strain WH7803), this protein is Photosystem I assembly protein Ycf3.